We begin with the raw amino-acid sequence, 365 residues long: 3-dehydroquinate synthase (365 aa).

NAD(+)-binding positions include 75 to 80 (DAENGK), 109 to 113 (GAATD), 133 to 134 (TT), K146, and K155. The Zn(2+) site is built by E188, H253, and H269.

This sequence belongs to the sugar phosphate cyclases superfamily. Dehydroquinate synthase family. The cofactor is Co(2+). It depends on Zn(2+) as a cofactor. Requires NAD(+) as cofactor.

It localises to the cytoplasm. It carries out the reaction 7-phospho-2-dehydro-3-deoxy-D-arabino-heptonate = 3-dehydroquinate + phosphate. The protein operates within metabolic intermediate biosynthesis; chorismate biosynthesis; chorismate from D-erythrose 4-phosphate and phosphoenolpyruvate: step 2/7. Catalyzes the conversion of 3-deoxy-D-arabino-heptulosonate 7-phosphate (DAHP) to dehydroquinate (DHQ). This Corynebacterium glutamicum (strain R) protein is 3-dehydroquinate synthase.